Consider the following 755-residue polypeptide: 1,4-alpha-glucan branching enzyme GlgB (755 aa).

Catalysis depends on aspartate 431, which acts as the Nucleophile. Catalysis depends on glutamate 484, which acts as the Proton donor.

It belongs to the glycosyl hydrolase 13 family. GlgB subfamily. Monomer.

It catalyses the reaction Transfers a segment of a (1-&gt;4)-alpha-D-glucan chain to a primary hydroxy group in a similar glucan chain.. Its pathway is glycan biosynthesis; glycogen biosynthesis. Catalyzes the formation of the alpha-1,6-glucosidic linkages in glycogen by scission of a 1,4-alpha-linked oligosaccharide from growing alpha-1,4-glucan chains and the subsequent attachment of the oligosaccharide to the alpha-1,6 position. The chain is 1,4-alpha-glucan branching enzyme GlgB from Prochlorococcus marinus (strain NATL1A).